The following is a 463-amino-acid chain: Chromosomal replication initiator protein DnaA (463 aa).

Positions 1-90 are domain I, interacts with DnaA modulators; that stretch reads MSLSLWQQCL…KPLSQIISQT (90 aa). Positions 91 to 126 are domain II; the sequence is VTASVSAPSAPIVRVAAPSRPSWDNAAPQPELSYRS. Residues 127–343 are domain III, AAA+ region; that stretch reads NVNPKHTFDN…GALNRVIANA (217 aa). Residues glycine 171, glycine 173, lysine 174, and threonine 175 each contribute to the ATP site. The segment at 344–463 is domain IV, binds dsDNA; sequence NFTGRAITID…FSNLIRTLSS (120 aa).

The protein belongs to the DnaA family. As to quaternary structure, oligomerizes as a right-handed, spiral filament on DNA at oriC.

It localises to the cytoplasm. Its function is as follows. Plays an essential role in the initiation and regulation of chromosomal replication. ATP-DnaA binds to the origin of replication (oriC) to initiate formation of the DNA replication initiation complex once per cell cycle. Binds the DnaA box (a 9 base pair repeat at the origin) and separates the double-stranded (ds)DNA. Forms a right-handed helical filament on oriC DNA; dsDNA binds to the exterior of the filament while single-stranded (ss)DNA is stabiized in the filament's interior. The ATP-DnaA-oriC complex binds and stabilizes one strand of the AT-rich DNA unwinding element (DUE), permitting loading of DNA polymerase. After initiation quickly degrades to an ADP-DnaA complex that is not apt for DNA replication. Binds acidic phospholipids. The protein is Chromosomal replication initiator protein DnaA of Serratia proteamaculans (strain 568).